We begin with the raw amino-acid sequence, 123 residues long: Probable U6 snRNA-associated Sm-like protein LSm4 (123 aa).

The Sm domain maps to 3 to 76 (LPLSLLKTAQ…IKYLRIPETV (74 aa)). Positions 85 to 97 (NEVRRQQQREQSR) are enriched in basic and acidic residues. The disordered stretch occupies residues 85–123 (NEVRRQQQREQSRGRGGGRGGRGGHRGGGGNRGGRGGAR). The segment covering 98–123 (GRGGGRGGRGGHRGGGGNRGGRGGAR) has biased composition (gly residues).

Belongs to the snRNP Sm proteins family. Component of the precatalytic spliceosome (spliceosome B complex). Component of the U4/U6-U5 tri-snRNP complex, a building block of the precatalytic spliceosome (spliceosome B complex). LSM2, LSM3, LSM4, LSM5, LSM6, LSM7 and LSM8 form a heptameric, ring-shaped subcomplex (the LSM2-8 complex) that is part of the U4/U6-U5 tri-snRNP complex and the precatalytic spliceosome.

The protein localises to the nucleus. Plays a role in pre-mRNA splicing as component of the U4/U6-U5 tri-snRNP complex that is involved in spliceosome assembly, and as component of the precatalytic spliceosome (spliceosome B complex). The heptameric LSM2-8 complex binds specifically to the 3'-terminal U-tract of U6 snRNA. The protein is Probable U6 snRNA-associated Sm-like protein LSm4 (lsm-4) of Caenorhabditis elegans.